Consider the following 281-residue polypeptide: Ribosomal RNA large subunit methyltransferase J (281 aa).

S-adenosyl-L-methionine is bound by residues H19, H42, S101, E119, 144-145, and D165; that span reads NG. D165 serves as the catalytic Proton acceptor.

The protein belongs to the RlmJ family. In terms of assembly, monomer.

It catalyses the reaction adenosine(2030) in 23S rRNA + S-adenosyl-L-methionine = N(6)-methyladenosine(2030) in 23S rRNA + S-adenosyl-L-homocysteine + H(+). Functionally, specifically methylates the adenine in position 2030 of 23S rRNA. This is Ribosomal RNA large subunit methyltransferase J from Haemophilus influenzae (strain ATCC 51907 / DSM 11121 / KW20 / Rd).